The primary structure comprises 483 residues: GTPase Obg (483 aa).

Residues 2-159 (SRFIDRVVLH…RDLVLELKSV (158 aa)) enclose the Obg domain. The 181-residue stretch at 160–340 (ADVGLLGFPS…LTFALAKMVR (181 aa)) folds into the OBG-type G domain. GTP-binding positions include 166–173 (GFPSAGKS), 191–195 (FTTLV), 212–215 (DVPG), 292–295 (NKTD), and 321–323 (SAV). Mg(2+) is bound by residues serine 173 and threonine 193. Residues 358 to 438 (PVKVKDSSFT…IGDVSFEWEP (81 aa)) form the OCT domain.

This sequence belongs to the TRAFAC class OBG-HflX-like GTPase superfamily. OBG GTPase family. As to quaternary structure, monomer. Mg(2+) serves as cofactor.

It localises to the cytoplasm. In terms of biological role, an essential GTPase which binds GTP, GDP and possibly (p)ppGpp with moderate affinity, with high nucleotide exchange rates and a fairly low GTP hydrolysis rate. Plays a role in control of the cell cycle, stress response, ribosome biogenesis and in those bacteria that undergo differentiation, in morphogenesis control. This Rhodococcus erythropolis (strain PR4 / NBRC 100887) protein is GTPase Obg.